A 149-amino-acid polypeptide reads, in one-letter code: MPDASEIPPPPPGAPGTQFLCLTICGYRRPGMSEEDYRHHMTQVSAPMTQDLMVKYGVKRWTMVHNTSETRALMSRLFDHQMTQLADFDCFSQVVFESVEEYRRMKEDAWYQEHLVGDHEKFADTQRSRMTLGWITELIRDGKVVKGTQ.

The EthD domain occupies 30 to 125; sequence PGMSEEDYRH…VGDHEKFADT (96 aa).

The protein belongs to the tpcK family.

It catalyses the reaction atrochrysone carboxylate + H(+) = atrochrysone + CO2. Its pathway is secondary metabolite biosynthesis. Functionally, decarboxylase; part of the gene cluster that mediates the biosynthesis of agnestins, dihydroxy-xanthone metabolites. The pathway begins with the assembly and cyclization of atrochrysone thioester by the non-reducing polyketide synthase Agnpks1. The atrochrysone carboxyl ACP thioesterase AgnL7 then breaks the thioester bond and releases the atrochrysone carboxylic acid as the first enzyme-free intermediate. The decarboxylase AgnL1 then catalyzes the concerted decarboxylation-elimination required to convert atochrysone carboxylic acid into emodin anthrone, which is further oxidized to emodin by the anthrone oxygenase AgnL2. Emodin then undergoes reduction catalyzed by the oxidoreductase AgnL4 to yield the dihydroquinone tautomer which is the substrate for reduction by the short chain dehydrogenase AgnL6 reduction to produce hydroxyketone, followed by AgnL8 dehydration and likely spontaneous autoxidation to chrysophanol. Baeyer-Villiger oxidation by the oxidase AgnL3 leads to monodictyphenone via cleavage of the C-10/C-10a bond of chrysophanol. Alternative cleavage at the C-4a/C-10 bond of chrysophanol also leads to the formation some cephalone F. Further conversion to agnestins A and B, requires reduction to dihydro-monodictyphenone, oxidation to agnestin C probably via an epoxide, and rearrangement to either agnestin A or agnestin B directly, although agnestin A or agnestin B can also interconvert. Within the cluster, AgnR1 is the only unassigned oxidoreductase present which could be involved in this conversion. However, AgnR1 seems not to be involved in this step, and thus genes involved in the proposed oxidation/reduction may be located elsewhere on the genome. Further agnestin A derivatives are probably formed by spontaneous decarboxylations, dehydrations and methanolysis reactions. The chain is Decarboxylase AgnL1 from Paecilomyces divaricatus (Penicillium divaricatum).